We begin with the raw amino-acid sequence, 420 residues long: Glucose-1-phosphate adenylyltransferase (420 aa).

Alpha-D-glucose 1-phosphate is bound by residues tyrosine 107, glycine 173, 188–189, and serine 206; that span reads EK.

This sequence belongs to the bacterial/plant glucose-1-phosphate adenylyltransferase family. As to quaternary structure, homotetramer.

It catalyses the reaction alpha-D-glucose 1-phosphate + ATP + H(+) = ADP-alpha-D-glucose + diphosphate. The protein operates within glycan biosynthesis; glycogen biosynthesis. In terms of biological role, involved in the biosynthesis of ADP-glucose, a building block required for the elongation reactions to produce glycogen. Catalyzes the reaction between ATP and alpha-D-glucose 1-phosphate (G1P) to produce pyrophosphate and ADP-Glc. The chain is Glucose-1-phosphate adenylyltransferase from Shewanella sp. (strain ANA-3).